We begin with the raw amino-acid sequence, 393 residues long: Protein DDI1 homolog 2 (393 aa).

The region spanning 1-81 is the Ubiquitin-like domain; the sequence is MLITVYCVRR…VILRQKEAPE (81 aa). The interval 82 to 127 is disordered; sequence TRPAAPFPGLDFSTIAVPGASSQPDPSQPQAPPPPPDTSSFPQGLD. A compositionally biased stretch (pro residues) spans 107 to 118; it reads PSQPQAPPPPPD. Residue D246 is part of the active site. The Ubiquitin-binding motif lies at 370 to 389; it reads EEIADRELAEVLQKSADEAD.

The protein belongs to the DDI1 family. Homodimer.

The protein localises to the cytoplasm. It is found in the cytosol. The protein resides in the chromosome. Functionally, aspartic protease that mediates the cleavage of NFE2L1/NRF1 at 'Leu-104', thereby promoting release of NFE2L1/NRF1 from the endoplasmic reticulum membrane. Ubiquitination of NFE2L1/NRF1 is a prerequisite for cleavage, suggesting that DDI2 specifically recognizes and binds ubiquitinated NFE2L1/NRF1. Seems to act as a proteasomal shuttle which links the proteasome and replication fork proteins like RTF2. Required for cellular survival following replication stress. The protein is Protein DDI1 homolog 2 (ddi2) of Xenopus laevis (African clawed frog).